A 152-amino-acid chain; its full sequence is Large ribosomal subunit protein uL15 (152 aa).

Polar residues predominate over residues 1–13 (MLTLGNLSPQEGS). The interval 1 to 62 (MLTLGNLSPQ…GGQMPLQRRL (62 aa)) is disordered. The segment covering 31–40 (TAGRGHKGFK) has biased composition (basic residues).

This sequence belongs to the universal ribosomal protein uL15 family. In terms of assembly, part of the 50S ribosomal subunit.

Functionally, binds to the 23S rRNA. The protein is Large ribosomal subunit protein uL15 of Desulfotalea psychrophila (strain LSv54 / DSM 12343).